The following is a 1413-amino-acid chain: DNA-directed RNA polymerase subunit beta' (1413 aa).

Positions 70, 72, 85, and 88 each coordinate Zn(2+). Mg(2+)-binding residues include aspartate 460, aspartate 462, and aspartate 464. Zn(2+)-binding residues include cysteine 819, cysteine 893, cysteine 900, and cysteine 903. Positions 1393-1413 (EAFEFGTPETPAAEQTPHTNE) are disordered.

It belongs to the RNA polymerase beta' chain family. In terms of assembly, the RNAP catalytic core consists of 2 alpha, 1 beta, 1 beta' and 1 omega subunit. When a sigma factor is associated with the core the holoenzyme is formed, which can initiate transcription. The cofactor is Mg(2+). Requires Zn(2+) as cofactor.

The catalysed reaction is RNA(n) + a ribonucleoside 5'-triphosphate = RNA(n+1) + diphosphate. Functionally, DNA-dependent RNA polymerase catalyzes the transcription of DNA into RNA using the four ribonucleoside triphosphates as substrates. The protein is DNA-directed RNA polymerase subunit beta' of Paraburkholderia phymatum (strain DSM 17167 / CIP 108236 / LMG 21445 / STM815) (Burkholderia phymatum).